Here is a 306-residue protein sequence, read N- to C-terminus: Methionyl-tRNA formyltransferase (306 aa).

(6S)-5,6,7,8-tetrahydrofolate is bound at residue 108 to 111; sequence SLLP.

This sequence belongs to the Fmt family.

It catalyses the reaction L-methionyl-tRNA(fMet) + (6R)-10-formyltetrahydrofolate = N-formyl-L-methionyl-tRNA(fMet) + (6S)-5,6,7,8-tetrahydrofolate + H(+). Attaches a formyl group to the free amino group of methionyl-tRNA(fMet). The formyl group appears to play a dual role in the initiator identity of N-formylmethionyl-tRNA by promoting its recognition by IF2 and preventing the misappropriation of this tRNA by the elongation apparatus. The chain is Methionyl-tRNA formyltransferase from Arthrobacter sp. (strain FB24).